We begin with the raw amino-acid sequence, 242 residues long: ATP synthase subunit a (242 aa).

The next 6 membrane-spanning stretches (helical) occupy residues 29–49 (SAVA…IAFV), 83–103 (VFFP…IIGM), 114–134 (IIVT…YGIY), 140–160 (FFSL…MVII), 181–201 (VAGH…TWFF), and 206–226 (IALV…QAYI).

This sequence belongs to the ATPase A chain family. In terms of assembly, F-type ATPases have 2 components, CF(1) - the catalytic core - and CF(0) - the membrane proton channel. CF(1) has five subunits: alpha(3), beta(3), gamma(1), delta(1), epsilon(1). CF(0) has three main subunits: a(1), b(2) and c(9-12). The alpha and beta chains form an alternating ring which encloses part of the gamma chain. CF(1) is attached to CF(0) by a central stalk formed by the gamma and epsilon chains, while a peripheral stalk is formed by the delta and b chains.

It localises to the cell inner membrane. Functionally, key component of the proton channel; it plays a direct role in the translocation of protons across the membrane. This is ATP synthase subunit a from Orientia tsutsugamushi (strain Boryong) (Rickettsia tsutsugamushi).